Here is a 476-residue protein sequence, read N- to C-terminus: Probable periplasmic serine endoprotease DegP-like (476 aa).

The N-terminal stretch at 1 to 27 (MSIPRLKSYFTILATVLVLGQAVSAQA) is a signal peptide. Active-site charge relay system residues include His116, Asp146, and Ser219. Substrate-binding positions include 217-219 (GNS) and 274-278 (LGVVI). PDZ domains are found at residues 263 to 354 (LKTG…IRDG) and 360 to 465 (ELTV…LRQG).

Belongs to the peptidase S1C family.

It localises to the periplasm. It carries out the reaction Acts on substrates that are at least partially unfolded. The cleavage site P1 residue is normally between a pair of hydrophobic residues, such as Val-|-Val.. In terms of biological role, might be efficient in the degradation of transiently denatured and unfolded proteins which accumulate in the periplasm following stress conditions. This Pseudomonas fluorescens (strain ATCC BAA-477 / NRRL B-23932 / Pf-5) protein is Probable periplasmic serine endoprotease DegP-like (mucD).